A 175-amino-acid chain; its full sequence is Transcription factor E (175 aa).

The region spanning 8–90 (NDPVIQKYLH…LWTFQYENIP (83 aa)) is the HTH TFE/IIEalpha-type domain.

It belongs to the TFE family. In terms of assembly, monomer. Interaction with RNA polymerase subunits RpoF and RpoE is necessary for Tfe stimulatory transcription activity. Able to interact with Tbp and RNA polymerase in the absence of DNA promoter. Interacts both with the preinitiation and elongation complexes.

Functionally, transcription factor that plays a role in the activation of archaeal genes transcribed by RNA polymerase. Facilitates transcription initiation by enhancing TATA-box recognition by TATA-box-binding protein (Tbp), and transcription factor B (Tfb) and RNA polymerase recruitment. Not absolutely required for transcription in vitro, but particularly important in cases where Tbp or Tfb function is not optimal. It dynamically alters the nucleic acid-binding properties of RNA polymerases by stabilizing the initiation complex and destabilizing elongation complexes. Seems to translocate with the RNA polymerase following initiation and acts by binding to the non template strand of the transcription bubble in elongation complexes. The sequence is that of Transcription factor E from Natronomonas pharaonis (strain ATCC 35678 / DSM 2160 / CIP 103997 / JCM 8858 / NBRC 14720 / NCIMB 2260 / Gabara) (Halobacterium pharaonis).